Reading from the N-terminus, the 628-residue chain is Netrin-4 (628 aa).

Residues 1 to 18 form the signal peptide; that stretch reads MGSCARLLLLWGCTVVAA. The region spanning 30-261 is the Laminin N-terminal domain; the sequence is CEKACNPRMG…AIYDFIVKGS (232 aa). N-linked (GlcNAc...) asparagine glycans are attached at residues Asn56 and Asn163. 12 disulfides stabilise this stretch: Cys262–Cys271, Cys264–Cys293, Cys295–Cys304, Cys307–Cys329, Cys332–Cys341, Cys334–Cys359, Cys362–Cys371, Cys374–Cys392, Cys395–Cys413, Cys397–Cys420, Cys422–Cys431, and Cys434–Cys446. Laminin EGF-like domains are found at residues 262 to 331, 332 to 394, and 395 to 448; these read CFCN…ECRT, CKCN…ACKP, and CSCH…GCRP. N-linked (GlcNAc...) asparagine glycosylation occurs at Asn353. A glycan (N-linked (GlcNAc...) asparagine) is linked at Asn483. Intrachain disulfides connect Cys506–Cys576 and Cys520–Cys627. The 122-residue stretch at 506-627 folds into the NTR domain; that stretch reads CECKEQTLGN…KVMDILKREC (122 aa).

May form a homodimer.

It localises to the secreted. The protein localises to the extracellular space. The protein resides in the extracellular matrix. In terms of biological role, may play an important role in neural, kidney and vascular development. This is Netrin-4 (NTN4) from Pongo abelii (Sumatran orangutan).